The chain runs to 183 residues: MTGNIVARRYARALFALGAKSGVGELDKLGSDLAALAGALDAAPELGRIFRNPIITAGEKRNVILKLVEKYGVSATVRNFCLLLADKGRLDCLSDIQAFYGVLLDAEKGVIRGELMTAVELAEAKRAQVKAALEQQAGRKLELTFSVNKDILGGVVLKVGDRVLDASLRAQLGILKDNIKRGE.

This sequence belongs to the ATPase delta chain family. F-type ATPases have 2 components, F(1) - the catalytic core - and F(0) - the membrane proton channel. F(1) has five subunits: alpha(3), beta(3), gamma(1), delta(1), epsilon(1). F(0) has three main subunits: a(1), b(2) and c(10-14). The alpha and beta chains form an alternating ring which encloses part of the gamma chain. F(1) is attached to F(0) by a central stalk formed by the gamma and epsilon chains, while a peripheral stalk is formed by the delta and b chains.

It localises to the cell inner membrane. Its function is as follows. F(1)F(0) ATP synthase produces ATP from ADP in the presence of a proton or sodium gradient. F-type ATPases consist of two structural domains, F(1) containing the extramembraneous catalytic core and F(0) containing the membrane proton channel, linked together by a central stalk and a peripheral stalk. During catalysis, ATP synthesis in the catalytic domain of F(1) is coupled via a rotary mechanism of the central stalk subunits to proton translocation. In terms of biological role, this protein is part of the stalk that links CF(0) to CF(1). It either transmits conformational changes from CF(0) to CF(1) or is implicated in proton conduction. In Nitratidesulfovibrio vulgaris (strain DSM 19637 / Miyazaki F) (Desulfovibrio vulgaris), this protein is ATP synthase subunit delta.